Reading from the N-terminus, the 229-residue chain is Ribosome maturation factor RimM (229 aa).

A disordered region spans residues 1 to 37; the sequence is MAGHDSGNAKRGRSPSFGVFVRKPVERTSAKGTSDGA. In terms of domain architecture, PRC barrel spans 148 to 229; the sequence is ADEFYWVDLI…RVVVDWEADY (82 aa).

This sequence belongs to the RimM family. In terms of assembly, binds ribosomal protein uS19.

The protein localises to the cytoplasm. In terms of biological role, an accessory protein needed during the final step in the assembly of 30S ribosomal subunit, possibly for assembly of the head region. Essential for efficient processing of 16S rRNA. May be needed both before and after RbfA during the maturation of 16S rRNA. It has affinity for free ribosomal 30S subunits but not for 70S ribosomes. In Burkholderia pseudomallei (strain 668), this protein is Ribosome maturation factor RimM.